The primary structure comprises 498 residues: ATP synthase subunit beta, chloroplastic (498 aa).

Gly172–Thr179 is an ATP binding site.

The protein belongs to the ATPase alpha/beta chains family. F-type ATPases have 2 components, CF(1) - the catalytic core - and CF(0) - the membrane proton channel. CF(1) has five subunits: alpha(3), beta(3), gamma(1), delta(1), epsilon(1). CF(0) has four main subunits: a(1), b(1), b'(1) and c(9-12).

It is found in the plastid. The protein localises to the chloroplast thylakoid membrane. It catalyses the reaction ATP + H2O + 4 H(+)(in) = ADP + phosphate + 5 H(+)(out). In terms of biological role, produces ATP from ADP in the presence of a proton gradient across the membrane. The catalytic sites are hosted primarily by the beta subunits. This chain is ATP synthase subunit beta, chloroplastic, found in Calycanthus floridus (Eastern sweetshrub).